Here is a 143-residue protein sequence, read N- to C-terminus: Anti-sigma F factor (143 aa).

Belongs to the anti-sigma-factor family.

It carries out the reaction L-seryl-[protein] + ATP = O-phospho-L-seryl-[protein] + ADP + H(+). It catalyses the reaction L-threonyl-[protein] + ATP = O-phospho-L-threonyl-[protein] + ADP + H(+). Functionally, binds to sigma F and blocks its ability to form an RNA polymerase holoenzyme (E-sigma F). Phosphorylates SpoIIAA on a serine residue. This phosphorylation may enable SpoIIAA to act as an anti-anti-sigma factor that counteracts SpoIIAB and thus releases sigma F from inhibition. The protein is Anti-sigma F factor of Clostridium botulinum (strain Alaska E43 / Type E3).